Here is a 962-residue protein sequence, read N- to C-terminus: Phosphatidylinositol 3,4,5-trisphosphate 3-phosphatase and dual-specificity protein phosphatase daf-18 (962 aa).

The interval 1 to 37 is disordered; that stretch reads MVTPPPDVPSTSTRSMARDLQENPNRQPGEPRVSEPY. Residues 58–230 enclose the Phosphatase tensin-type domain; that stretch reads CRTEYQNIDL…YYYHKLRERE (173 aa). Catalysis depends on cysteine 169, which acts as the Phosphocysteine intermediate. In terms of domain architecture, C2 tensin-type spans 234–530; it reads LPLRMQLIGV…GMKLHVVLRC (297 aa). 2 disordered regions span residues 382–416 and 689–731; these read DTSI…WQIV and IENT…RLPD. The span at 392-403 shows a compositional bias: basic and acidic residues; sequence RRNETPMRKIDP. The span at 692-704 shows a compositional bias: low complexity; it reads TGPSTSGSSAPGT. The segment covering 706–720 has biased composition (basic and acidic residues); the sequence is KKTEASQSDKVKPAT.

The protein belongs to the PTEN phosphatase protein family. In terms of assembly, interacts (via C-terminus) with vab-1 (via kinase domain); the interaction is independent of vab-1 kinase activity. Interacts with arr-1 and mpz-1; the interaction may inhibit daf-18. Interacts (via C-terminus) with daf-2 (via kinase domain). Post-translationally, phosphorylated by vab-1 on tyrosine residues which may promote daf-18 degradation. As to expression, expressed in embryo, larvae and in adult germline (at protein level). Expressed at equal levels in the 6 vulva precursor cells (VPCs) of L2 larvae and in the descendant cells of the induced VPCs (at protein level). Expressed in the uterus (at protein level). Expressed in the Z2/Z3 germline precursors, oocytes, several amphid neurons and weakly in the nerve cord (at protein level).

The protein resides in the perikaryon. It localises to the cell membrane. Its subcellular location is the cell projection. It is found in the axon. The protein localises to the dendrite. The protein resides in the cytoplasm. It localises to the nucleus. The enzyme catalyses a 1,2-diacyl-sn-glycero-3-phospho-(1D-myo-inositol-3,4,5-trisphosphate) + H2O = a 1,2-diacyl-sn-glycero-3-phospho-(1D-myo-inositol-4,5-bisphosphate) + phosphate. The catalysed reaction is O-phospho-L-seryl-[protein] + H2O = L-seryl-[protein] + phosphate. It carries out the reaction O-phospho-L-threonyl-[protein] + H2O = L-threonyl-[protein] + phosphate. It catalyses the reaction O-phospho-L-tyrosyl-[protein] + H2O = L-tyrosyl-[protein] + phosphate. The enzyme catalyses 1,2-dioctanoyl-sn-glycero-3-phospho-(1D-myo-inositol-3,4,5-trisphosphate) + H2O = 1,2-dioctanoyl-sn-glycero-3-phospho-(1D-myo-inositol-4,5-bisphosphate) + phosphate. The catalysed reaction is 1,2-dihexadecanoyl-sn-glycero-3-phospho-(1D-myo-inositol-3,4,5-trisphosphate) + H2O = 1,2-dihexadecanoyl-sn-glycero-3-phospho-(1D-myo-inositol-4,5-bisphosphate) + phosphate. Functionally, acts as a dual-specificity protein phosphatase, dephosphorylating tyrosine-, serine- and threonine-phosphorylated proteins. Also acts as a lipid phosphatase, removing the phosphate in the D3 position of the inositol ring from phosphatidylinositol 3,4,5-trisphosphate. By dephosphorylating PtdIns(3,4,5)P3 antagonizes PtdIns(3,4,5)P3 production by age-1/PI3K and thus, negatively regulates daf-2-mediated processes including dauer formation, longevity, fat metabolism, chemotaxis towards salt, thermotolerance and axon guidance. Similarly, promotes apoptosis during embryonic development by suppressing the recruitment of the prosurvival kinases akt-1/2 to the plasma membrane. In addition, regulates Z2/Z3 germline precursor cell cycle by maintaining them arrested at the G2 stage and by controlling their growth during L1 diapause. After sperm depletion in larvae and adult hermaphrodites, promotes germline stem cell quiescence and oocyte accumulation. By dephosphorylating ephrin-like receptor vab-1 on tyrosine residues, negatively regulates oocyte maturation downstream of vab-1 and upstream of mpk-1, independently of daf-2. Plays a role in postembryonic muscle arm extensions. Required for neurite outgrowth during AIY interneuron embryonic development. Mainly independently of daf-2, negatively regulates vulva induction probably by inhibiting mpk-1 phosphorylation. Both lipid and protein phosphatase activities are required for the regulation of vulva induction. Plays a role in gonad and germline development following the L1 diapause. This chain is Phosphatidylinositol 3,4,5-trisphosphate 3-phosphatase and dual-specificity protein phosphatase daf-18, found in Caenorhabditis elegans.